Here is a 101-residue protein sequence, read N- to C-terminus: Large ribosomal subunit protein uL24 (101 aa).

It belongs to the universal ribosomal protein uL24 family. Part of the 50S ribosomal subunit.

In terms of biological role, one of two assembly initiator proteins, it binds directly to the 5'-end of the 23S rRNA, where it nucleates assembly of the 50S subunit. Functionally, one of the proteins that surrounds the polypeptide exit tunnel on the outside of the subunit. The chain is Large ribosomal subunit protein uL24 from Ruegeria sp. (strain TM1040) (Silicibacter sp.).